Consider the following 1029-residue polypeptide: DNA repair protein RAD5A (1029 aa).

A disordered region spans residues 83-104 (SVGANHRVEEENESVNGGGEES). The region spanning 406-622 (PSTLQMARGG…YSLLRFLRIE (217 aa)) is the Helicase ATP-binding domain. Residue 419–426 (DAMGLGKT) coordinates ATP. The short motif at 573–576 (DEAH) is the DEAH box element. An RING-type zinc finger spans residues 794-834 (CPICLEALEDAVLTPCAHRLCRECLLASWRNSTSGLCPVCR). The region spanning 864 to 1029 (KITALLEELE…RIEELKMLFT (166 aa)) is the Helicase C-terminal domain.

This sequence belongs to the SNF2/RAD54 helicase family. RAD16 subfamily.

It is found in the nucleus. In terms of biological role, functions in error-free postreplication DNA repair or DNA-damage tolerance (DTT) pathway. Required for homologous recombination (HR) induced by DNA double-strand break (DSB) in somatic cells. Required for damage-induced DNA repair, independently of MUS81 and RECQL4A. Plays a role in synthesis-dependent strand annealing (SDSA) but not in single-strand annealing (SSA). Possesses double-stranded DNA-dependent ATPase activity. Is able to regress replication forks with preference for forks with a leading strand gap. Is able to catalyze branch migration of Holliday junctions and is unaffected by protein blockades. The protein is DNA repair protein RAD5A of Arabidopsis thaliana (Mouse-ear cress).